A 142-amino-acid polypeptide reads, in one-letter code: Transcriptional regulator MraZ (142 aa).

SpoVT-AbrB domains follow at residues 5-46 and 75-118; these read THPV…DRSE and AAAQ…DSEA.

It belongs to the MraZ family. In terms of assembly, forms oligomers.

It localises to the cytoplasm. Its subcellular location is the nucleoid. The chain is Transcriptional regulator MraZ from Tropheryma whipplei (strain TW08/27) (Whipple's bacillus).